A 382-amino-acid chain; its full sequence is Na(+)/H(+) antiporter NhaA 2 (382 aa).

Transmembrane regions (helical) follow at residues 7–27 (AGGV…NSYL), 28–48 (SGFY…AFEI), 52–72 (LLLW…GLEV), 88–108 (VLPG…YASF), 118–138 (GWAI…SLFG), 147–167 (LFLL…IALF), 170–190 (HELS…LFVL), 206–226 (LVVW…GFVI), 254–274 (VAYF…LGGI), 285–305 (LGII…VCWL), 325–345 (GVCL…SLAF), and 356–376 (VKLG…LILT).

It belongs to the NhaA Na(+)/H(+) (TC 2.A.33) antiporter family.

It localises to the cell inner membrane. The catalysed reaction is Na(+)(in) + 2 H(+)(out) = Na(+)(out) + 2 H(+)(in). Na(+)/H(+) antiporter that extrudes sodium in exchange for external protons. The polypeptide is Na(+)/H(+) antiporter NhaA 2 (Saccharophagus degradans (strain 2-40 / ATCC 43961 / DSM 17024)).